The sequence spans 438 residues: POU domain, class 3, transcription factor 3-A (438 aa).

Disordered stretches follow at residues 22–43, 102–172, and 186–248; these read VHSE…SVSG, SPWS…QSQQ, and GMLN…PTSD. 2 stretches are compositionally biased toward polar residues: residues 103–123 and 146–159; these read PWSS…VKSS and QSHQ…TASH. The span at 160-172 shows a compositional bias: low complexity; the sequence is ISTITGGQQQSQQ. Residues 210-230 show a composition bias toward basic residues; that stretch reads HHHHHHHQQQHPHHHHHHQHH. The POU-specific domain occupies 242 to 316; that stretch reads EDTPTSDDLE…LLNKWLEEAD (75 aa). The segment at residues 334–393 is a DNA-binding region (homeobox); the sequence is KRKKRTSIEVSVKGALESHFLKCPKPSAQEITSLADNLQLEKEVVRVWFCNRRQKEKRMT.

It belongs to the POU transcription factor family. Class-3 subfamily. As to expression, predominantly expressed in the embryonic and adult central nervous system. In adults, isoform 2 is expressed in the brain, ovary, basal cells of the skin and muscle satellite cells.

The protein resides in the nucleus. Functionally, transcription factor that may play important roles in patterning the embryonic brain. The polypeptide is POU domain, class 3, transcription factor 3-A (pou3f3a) (Danio rerio (Zebrafish)).